The following is a 156-amino-acid chain: Small ribosomal subunit protein uS7 (156 aa).

Belongs to the universal ribosomal protein uS7 family. Part of the 30S ribosomal subunit. Contacts proteins S9 and S11.

Its function is as follows. One of the primary rRNA binding proteins, it binds directly to 16S rRNA where it nucleates assembly of the head domain of the 30S subunit. Is located at the subunit interface close to the decoding center, probably blocks exit of the E-site tRNA. The protein is Small ribosomal subunit protein uS7 of Bacillus cytotoxicus (strain DSM 22905 / CIP 110041 / 391-98 / NVH 391-98).